A 565-amino-acid chain; its full sequence is Bifunctional dihydrofolate reductase-thymidylate synthase 2 (565 aa).

In terms of domain architecture, DHFR spans 65 to 242 (TYQVVVAATK…LRFSFTTHVR (178 aa)). Val-69 contacts substrate. NADP(+) is bound by residues Ala-71 and 77–83 (GIGKDGK). Residue Asp-91 coordinates substrate. Residues 115–117 (RKT) and 136–139 (LSRS) each bind NADP(+). A substrate-binding site is contributed by Ile-178. 179–186 (GGGDILRE) serves as a coordination point for NADP(+). Residue Thr-199 participates in substrate binding. A hinge region spans residues 245-280 (SSSAGEASDESDGSKVLQVDWKKFSSVLPKMIFDRH). The thymidylate synthase stretch occupies residues 281-565 (EEYLYLNLVK…HKKIDMKMAV (285 aa)). Arg-302 is a dUMP binding site. The active site involves Cys-447. Residues His-448, 466-470 (QRSAD), Asn-478, and 508-510 (HVY) each bind dUMP.

It in the N-terminal section; belongs to the dihydrofolate reductase family. The protein in the C-terminal section; belongs to the thymidylate synthase family. As to quaternary structure, heterodimer or homodimer.

It carries out the reaction (6S)-5,6,7,8-tetrahydrofolate + NADP(+) = 7,8-dihydrofolate + NADPH + H(+). The enzyme catalyses dUMP + (6R)-5,10-methylene-5,6,7,8-tetrahydrofolate = 7,8-dihydrofolate + dTMP. It functions in the pathway cofactor biosynthesis; tetrahydrofolate biosynthesis; 5,6,7,8-tetrahydrofolate from 7,8-dihydrofolate: step 1/1. In terms of biological role, bifunctional enzyme. Involved in de novo dTMP biosynthesis. Key enzyme in folate metabolism. Can play two different roles depending on the source of dihydrofolate: de novo synthesis of tetrahydrofolate or recycling of the dihydrofolate released as one of the end products of the TS catalyzed reaction. Catalyzes an essential reaction for de novo glycine and purine synthesis, DNA precursor synthesis, and for the conversion of dUMP to dTMP. The polypeptide is Bifunctional dihydrofolate reductase-thymidylate synthase 2 (THY-2) (Arabidopsis thaliana (Mouse-ear cress)).